We begin with the raw amino-acid sequence, 314 residues long: Serine/threonine-protein phosphatase SIT4 (314 aa).

Mn(2+) is bound by residues Asp-53, His-55, Asp-85, and Asn-117. His-118 serves as the catalytic Proton donor. 2 residues coordinate Mn(2+): His-167 and His-241.

It belongs to the PPP phosphatase family. PP-6 (PP-V) subfamily. As to quaternary structure, interacts with MDS3. The cofactor is Mn(2+).

It is found in the cytoplasm. The enzyme catalyses O-phospho-L-seryl-[protein] + H2O = L-seryl-[protein] + phosphate. It carries out the reaction O-phospho-L-threonyl-[protein] + H2O = L-threonyl-[protein] + phosphate. Functionally, serine/threonine protein phosphatase which is involved in the dephosphorylation of the large subunit of RNA polymerase II. Is required in late G1 for normal G1 cyclin expression, bud initiation and expression of certain genes that are periodically expressed during late G1. Plays a role during hyphal growth through the regulation of cell wall biogenesis, osmosensing and protein translation. Involved in virulence in a mouse systemic infection model. In Candida albicans (strain SC5314 / ATCC MYA-2876) (Yeast), this protein is Serine/threonine-protein phosphatase SIT4 (SIT4).